The following is a 215-amino-acid chain: Cytochrome b6 (215 aa).

The chain crosses the membrane as a helical span at residues 32–52; that stretch reads IFYCLGGITLTCFLVQVASGF. Cysteine 35 contributes to the heme c binding site. The heme b site is built by histidine 86 and histidine 100. The next 3 helical transmembrane spans lie at 90 to 110, 116 to 136, and 186 to 206; these read ASMM…TGGF, LTWV…VTGY, and LHTF…FLMI. Heme b contacts are provided by histidine 187 and histidine 202.

The protein belongs to the cytochrome b family. PetB subfamily. The 4 large subunits of the cytochrome b6-f complex are cytochrome b6, subunit IV (17 kDa polypeptide, PetD), cytochrome f and the Rieske protein, while the 4 small subunits are PetG, PetL, PetM and PetN. The complex functions as a dimer. It depends on heme b as a cofactor. The cofactor is heme c.

It is found in the plastid. The protein resides in the chloroplast thylakoid membrane. Functionally, component of the cytochrome b6-f complex, which mediates electron transfer between photosystem II (PSII) and photosystem I (PSI), cyclic electron flow around PSI, and state transitions. This is Cytochrome b6 from Anthoceros angustus (Hornwort).